The following is a 267-amino-acid chain: Heme-containing CO-sensing transcriptional regulator RcoM 2 (267 aa).

One can recognise a PAS domain in the interval 15–86 (RAETFQHKLE…KSRDKLRFLL (72 aa)). Heme contacts are provided by His-74 and Met-104. An HTH LytTR-type domain is found at 161 to 266 (IPVYRKSRVI…TAQLKELLGV (106 aa)).

It depends on heme as a cofactor.

Its subcellular location is the cytoplasm. In terms of biological role, one-component, b-type heme-containing aerobic sensor and transcriptional regulator that responds to CO by activating the expression of the oxidation operon cox. The sequence is that of Heme-containing CO-sensing transcriptional regulator RcoM 2 (rcoM2) from Paraburkholderia xenovorans (strain LB400).